The primary structure comprises 176 residues: MLDRDGYRPNVGIIICNTRNQVFWGKRVREHSWQFPQGGIKPGESPEAAMYRELMEEVGLSPHHVKIIGRTRDWLRYDVPTHWVRREWRGSYRGQKQIWFLLRLTGRDSDVCLRATHHPEFDGWRWSDYWSPIEHVIDFKRNVYEMALTELSRYLRGLESRQASDAGAVQPDGAPL.

Positions 6–149 constitute a Nudix hydrolase domain; it reads GYRPNVGIII…KRNVYEMALT (144 aa). The short motif at 38-59 is the Nudix box element; the sequence is GGIKPGESPEAAMYRELMEEVG.

Belongs to the Nudix hydrolase family. RppH subfamily. It depends on a divalent metal cation as a cofactor.

In terms of biological role, accelerates the degradation of transcripts by removing pyrophosphate from the 5'-end of triphosphorylated RNA, leading to a more labile monophosphorylated state that can stimulate subsequent ribonuclease cleavage. This chain is RNA pyrophosphohydrolase, found in Laribacter hongkongensis (strain HLHK9).